The primary structure comprises 1044 residues: MLTDGSQHTYQNGETKNSKEHERKCDESAHLQDNSQTTHKKKEKKNSKEKHGIKHSESEHLQDDISQRVTGKGRRRNSKGTPKKLRFNRPRILEDGKKPRNPATTRLRTISNKRRKKDIDSEDEVIPELATPTKESFPKRRKNEKIKRSVARTLNFKQEIVLSCLEFDKICGPIFPRGKKRTTTRRRYDFLCFLLPMPVWKKQSRRSKRRKNMVRWARIASSSKLLEETLPLIVSHPTINGQADASLHIDDTLVRHVVSKQTKKSANNVIEHLNRQITYQKDHGLSSLADVPLHIEDTLIKSASSVLSERPIKKTKDIAKLIKDMGRLKINKKVTTMIKADKKLVTAKVNLDPETIKEWDVLMVNDSPSRSYDDKETEAKWKKEREIFQTRIDLFINRMHRLQGNRKFKQWKGSVVDSVVGVFLTQNTTDYLSSNAFMSVAAKFPVDAREGLSYYIEEPQDAKSSECIILSDESISKVEDHENTAKRKNEKTGIIEDEIVDWNNLRRMYTKEGSRPEMHMDSVNWSDVRLSGQNVLETTIKKRGQFRILSERILKFLNDEVNQNGNIDLEWLRNAPSHLVKRYLLEIEGIGLKSAECVRLLGLKHHAFPVDTNVGRIAVRLGLVPLEPLPNGVQMHQLFEYPSMDSIQKYLWPRLCKLPQETLYELHYQMITFGKVFCTKTIPNCNACPMKSECKYFASAYVSSKVLLESPEEKMHEPNTFMNAHSQDVAVDMTSNINLVEECVSSGCSDQAICYKPLVEFPSSPRAEIPESTDIEDVPFMNLYQSYASVPKIDFDLDALKKSVEDALVISGRMSSSDEEISKALVIPTPENACIPIKPPRKMKYYNRLRTEHVVYVLPDNHELLHDFERRKLDDPSPYLLAIWQPGETSSSFVPPKKKCSSDGSKLCKIKNCSYCWTIREQNSNIFRGTILIPCRTAMRGAFPLNGTYFQTNEVFADHETSLNPIVFRRELCKGLEKRALYCGSTVTSIFKLLDTRRIELCFWTGFLCLRAFDRKQRDPKELVRRLHTPPDERGPKFMSDDDI.

The span at 1–15 (MLTDGSQHTYQNGET) shows a compositional bias: polar residues. The segment at 1–107 (MLTDGSQHTY…KPRNPATTRL (107 aa)) is disordered. Positions 16–30 (KNSKEHERKCDESAH) are enriched in basic and acidic residues. Over residues 38–53 (THKKKEKKNSKEKHGI) the composition is skewed to basic residues. Positions 54-66 (KHSESEHLQDDIS) are enriched in basic and acidic residues. A compositionally biased stretch (basic residues) spans 71 to 89 (GKGRRRNSKGTPKKLRFNR). The DEMETER stretch occupies residues 348–445 (KVNLDPETIK…AFMSVAAKFP (98 aa)). Cys-678, Cys-685, Cys-688, and Cys-694 together coordinate [4Fe-4S] cluster. The interval 1024–1044 (VRRLHTPPDERGPKFMSDDDI) is disordered.

It belongs to the DNA glycosylase family. DEMETER subfamily. The cofactor is [4Fe-4S] cluster.

It localises to the nucleus. Potential transcriptional activator that may act by nicking the target promoter. Catalyzes the release of 5-methylcytosine (5-meC) from DNA by a glycosylase/lyase mechanism. In Arabidopsis thaliana (Mouse-ear cress), this protein is DEMETER-like protein 3 (DML3).